The chain runs to 205 residues: LexA repressor (205 aa).

A DNA-binding region (H-T-H motif) is located at residues 29–49; the sequence is IRDICKATGLRSSSTVYNYLN. Active-site for autocatalytic cleavage activity residues include S128 and K165.

The protein belongs to the peptidase S24 family. Homodimer.

It carries out the reaction Hydrolysis of Ala-|-Gly bond in repressor LexA.. Functionally, represses a number of genes involved in the response to DNA damage (SOS response), including recA and lexA. In the presence of single-stranded DNA, RecA interacts with LexA causing an autocatalytic cleavage which disrupts the DNA-binding part of LexA, leading to derepression of the SOS regulon and eventually DNA repair. This Moorella thermoacetica (strain ATCC 39073 / JCM 9320) protein is LexA repressor.